A 505-amino-acid chain; its full sequence is Maturase K (505 aa).

It belongs to the intron maturase 2 family. MatK subfamily.

It is found in the plastid. The protein localises to the chloroplast. Usually encoded in the trnK tRNA gene intron. Probably assists in splicing its own and other chloroplast group II introns. This Apocynum androsaemifolium (Spreading dogbane) protein is Maturase K.